Consider the following 328-residue polypeptide: E3 ubiquitin-protein ligase SINA-like 5 (328 aa).

The disordered stretch occupies residues 1 to 77 (MARSGGNDGH…GSPKSSQPVK (77 aa)). 2 stretches are compositionally biased toward acidic residues: residues 10-20 (HEEELDPELFE) and 27-62 (GYED…ENVT). Over residues 63–77 (TDEQSGSPKSSQPVK) the composition is skewed to polar residues. The segment at 86 to 122 (CPTCCEPLKRPIYQCSNGHLACSSCCQKLNKKCSFCR) adopts an RING-type; degenerate zinc-finger fold. The tract at residues 136–324 (VIEASIVPCP…MQICIAYGYK (189 aa)) is SBD. An SIAH-type; degenerate zinc finger spans residues 139–197 (ASIVPCPNAKHGCKETTTYCNQSSHEKVCKFVRCSCPVSNCNYVSSYSNLKSHACSTAH). Zn(2+) is bound by residues cysteine 144, cysteine 151, histidine 163, cysteine 167, cysteine 174, cysteine 179, histidine 191, and histidine 197.

The protein belongs to the SINA (Seven in absentia) family.

The catalysed reaction is S-ubiquitinyl-[E2 ubiquitin-conjugating enzyme]-L-cysteine + [acceptor protein]-L-lysine = [E2 ubiquitin-conjugating enzyme]-L-cysteine + N(6)-ubiquitinyl-[acceptor protein]-L-lysine.. Its pathway is protein modification; protein ubiquitination. In terms of biological role, E3 ubiquitin-protein ligase that mediates ubiquitination and subsequent proteasomal degradation of target proteins. E3 ubiquitin ligases accept ubiquitin from an E2 ubiquitin-conjugating enzyme in the form of a thioester and then directly transfers the ubiquitin to targeted substrates. It probably triggers the ubiquitin-mediated degradation of different substrates. This is E3 ubiquitin-protein ligase SINA-like 5 from Arabidopsis thaliana (Mouse-ear cress).